We begin with the raw amino-acid sequence, 297 residues long: Protein phosphatase PTC7 homolog (297 aa).

Residues M1–Y27 constitute a mitochondrion transit peptide. One can recognise a PPM-type phosphatase domain in the interval S28–V292. Positions 71, 72, and 216 each coordinate Mn(2+).

It belongs to the PP2C family. Mg(2+) is required as a cofactor. Mn(2+) serves as cofactor.

Its subcellular location is the mitochondrion matrix. The enzyme catalyses O-phospho-L-seryl-[protein] + H2O = L-seryl-[protein] + phosphate. The catalysed reaction is O-phospho-L-threonyl-[protein] + H2O = L-threonyl-[protein] + phosphate. Protein phosphatase which positively regulates biosynthesis of the ubiquinone, coenzyme Q. Dephosphorylates the ubiquinone biosynthesis protein coq7 which is likely to lead to its activation. This is Protein phosphatase PTC7 homolog (pptc7) from Danio rerio (Zebrafish).